Reading from the N-terminus, the 138-residue chain is Sec-independent protein translocase protein TatB (138 aa).

Residues 1-21 (MFDIGFSELLLIAVVALVVLG) traverse the membrane as a helical segment. The disordered stretch occupies residues 116–138 (VHHVHVPPPSTSTHGNNGQEKSQ). Residues 126–138 (TSTHGNNGQEKSQ) show a composition bias toward polar residues.

The protein belongs to the TatB family. As to quaternary structure, the Tat system comprises two distinct complexes: a TatABC complex, containing multiple copies of TatA, TatB and TatC subunits, and a separate TatA complex, containing only TatA subunits. Substrates initially bind to the TatABC complex, which probably triggers association of the separate TatA complex to form the active translocon.

Its subcellular location is the cell inner membrane. Functionally, part of the twin-arginine translocation (Tat) system that transports large folded proteins containing a characteristic twin-arginine motif in their signal peptide across membranes. Together with TatC, TatB is part of a receptor directly interacting with Tat signal peptides. TatB may form an oligomeric binding site that transiently accommodates folded Tat precursor proteins before their translocation. The protein is Sec-independent protein translocase protein TatB of Xylella fastidiosa (strain Temecula1 / ATCC 700964).